Here is a 256-residue protein sequence, read N- to C-terminus: Pimeloyl-[acyl-carrier protein] methyl ester esterase (256 aa).

In terms of domain architecture, AB hydrolase-1 spans 17–241; the sequence is VYLIHGWGAN…KAAHAPFLSH (225 aa). Substrate is bound by residues Trp-23, 83-84, and 145-149; these read SL and FLQLQ. The Nucleophile role is filled by Ser-83. Residues Asp-207 and His-235 contribute to the active site. His-235 is a binding site for substrate.

This sequence belongs to the AB hydrolase superfamily. Carboxylesterase BioH family. In terms of assembly, monomer.

The protein localises to the cytoplasm. The enzyme catalyses 6-carboxyhexanoyl-[ACP] methyl ester + H2O = 6-carboxyhexanoyl-[ACP] + methanol + H(+). It participates in cofactor biosynthesis; biotin biosynthesis. Functionally, the physiological role of BioH is to remove the methyl group introduced by BioC when the pimeloyl moiety is complete. It allows to synthesize pimeloyl-ACP via the fatty acid synthetic pathway through the hydrolysis of the ester bonds of pimeloyl-ACP esters. The chain is Pimeloyl-[acyl-carrier protein] methyl ester esterase from Neisseria meningitidis serogroup C / serotype 2a (strain ATCC 700532 / DSM 15464 / FAM18).